We begin with the raw amino-acid sequence, 503 residues long: Probable zinc metalloprotease UREG_01421 (503 aa).

A signal peptide spans Met-1 to Ala-24. Residue Asn-105 is glycosylated (N-linked (GlcNAc...) asparagine). The Zn(2+) site is built by His-176, Asp-196, and Glu-232. The N-linked (GlcNAc...) asparagine glycan is linked to Asn-247. Asp-259 serves as a coordination point for Zn(2+). Residues Met-416–Ala-503 enclose the Fibronectin type-III domain. N-linked (GlcNAc...) asparagine glycosylation occurs at Asn-429.

Belongs to the peptidase M28 family. M28B subfamily. Zn(2+) serves as cofactor.

The protein localises to the secreted. The protein is Probable zinc metalloprotease UREG_01421 of Uncinocarpus reesii (strain UAMH 1704).